A 462-amino-acid polypeptide reads, in one-letter code: Fumarate hydratase class II (462 aa).

Residues 97-99 (SGT), 127-130 (HPND), 137-139 (SSN), and threonine 185 contribute to the substrate site. Histidine 186 functions as the Proton donor/acceptor in the catalytic mechanism. Serine 316 is an active-site residue. Residues serine 317 and 322-324 (KVN) each bind substrate.

The protein belongs to the class-II fumarase/aspartase family. Fumarase subfamily. In terms of assembly, homotetramer.

The protein resides in the cytoplasm. It carries out the reaction (S)-malate = fumarate + H2O. It participates in carbohydrate metabolism; tricarboxylic acid cycle; (S)-malate from fumarate: step 1/1. Functionally, involved in the TCA cycle. Catalyzes the stereospecific interconversion of fumarate to L-malate. In Bacillus subtilis (strain 168), this protein is Fumarate hydratase class II.